A 138-amino-acid chain; its full sequence is Basic phospholipase A2 Drk-b1 (138 aa).

Positions 1 to 16 (MRTLWIVAMCLIGVEG) are cleaved as a signal peptide. 7 cysteine pairs are disulfide-bonded: Cys-42/Cys-131, Cys-44/Cys-60, Cys-59/Cys-111, Cys-65/Cys-138, Cys-66/Cys-104, Cys-73/Cys-97, and Cys-91/Cys-102. The Ca(2+) site is built by Tyr-43, Gly-45, and Gly-47. Residue His-63 is part of the active site. Asp-64 lines the Ca(2+) pocket. Asp-105 is a catalytic residue.

Requires Ca(2+) as cofactor. As to expression, expressed by the venom gland.

It is found in the secreted. The enzyme catalyses a 1,2-diacyl-sn-glycero-3-phosphocholine + H2O = a 1-acyl-sn-glycero-3-phosphocholine + a fatty acid + H(+). Exhibits high hydrolytic activities and shows strong preference for the anionic micelles (dPPC with deoxycholate) to the zwitterionic micelles (dPPC with Triton X-100). PLA2 catalyzes the calcium-dependent hydrolysis of the 2-acyl groups in 3-sn-phosphoglycerides. The polypeptide is Basic phospholipase A2 Drk-b1 (Daboia russelii (Russel's viper)).